The sequence spans 408 residues: CinA-like protein (408 aa).

Belongs to the CinA family.

The polypeptide is CinA-like protein (Anaeromyxobacter sp. (strain K)).